A 117-amino-acid polypeptide reads, in one-letter code: Aspartate 1-decarboxylase (117 aa).

Ser-25 (schiff-base intermediate with substrate; via pyruvic acid) is an active-site residue. A Pyruvic acid (Ser) modification is found at Ser-25. Substrate is bound at residue Thr-57. Tyr-58 (proton donor) is an active-site residue. 72 to 74 serves as a coordination point for substrate; the sequence is GAA.

It belongs to the PanD family. In terms of assembly, heterooctamer of four alpha and four beta subunits. It depends on pyruvate as a cofactor. In terms of processing, is synthesized initially as an inactive proenzyme, which is activated by self-cleavage at a specific serine bond to produce a beta-subunit with a hydroxyl group at its C-terminus and an alpha-subunit with a pyruvoyl group at its N-terminus.

The protein localises to the cytoplasm. The enzyme catalyses L-aspartate + H(+) = beta-alanine + CO2. It participates in cofactor biosynthesis; (R)-pantothenate biosynthesis; beta-alanine from L-aspartate: step 1/1. Catalyzes the pyruvoyl-dependent decarboxylation of aspartate to produce beta-alanine. The sequence is that of Aspartate 1-decarboxylase from Helicobacter pylori (strain ATCC 700392 / 26695) (Campylobacter pylori).